Reading from the N-terminus, the 343-residue chain is Glucokinase (343 aa).

18 to 23 (GDIGGT) lines the ATP pocket.

The protein belongs to the bacterial glucokinase family.

The protein resides in the cytoplasm. It catalyses the reaction D-glucose + ATP = D-glucose 6-phosphate + ADP + H(+). This Brucella melitensis biotype 1 (strain ATCC 23456 / CCUG 17765 / NCTC 10094 / 16M) protein is Glucokinase.